The chain runs to 545 residues: CTP synthase (545 aa).

The tract at residues 1 to 267 (MTKFIFVTGG…AEQVLNLLQM (267 aa)) is amidoligase domain. Position 13 (S13) interacts with CTP. A UTP-binding site is contributed by S13. ATP contacts are provided by residues 14–19 (SIGKGI) and D71. 2 residues coordinate Mg(2+): D71 and E141. CTP-binding positions include 148 to 150 (DIE), 188 to 193 (KTKPTQ), and K224. UTP-binding positions include 188 to 193 (KTKPTQ) and K224. Residues 292-534 (EIAIVGKYVQ…IQAAIALSLS (243 aa)) form the Glutamine amidotransferase type-1 domain. G354 is an L-glutamine binding site. C381 functions as the Nucleophile; for glutamine hydrolysis in the catalytic mechanism. L-glutamine contacts are provided by residues 382–385 (LGMQ), E405, and R462. Active-site residues include H507 and E509.

The protein belongs to the CTP synthase family. In terms of assembly, homotetramer.

It carries out the reaction UTP + L-glutamine + ATP + H2O = CTP + L-glutamate + ADP + phosphate + 2 H(+). It catalyses the reaction L-glutamine + H2O = L-glutamate + NH4(+). The catalysed reaction is UTP + NH4(+) + ATP = CTP + ADP + phosphate + 2 H(+). It participates in pyrimidine metabolism; CTP biosynthesis via de novo pathway; CTP from UDP: step 2/2. With respect to regulation, allosterically activated by GTP, when glutamine is the substrate; GTP has no effect on the reaction when ammonia is the substrate. The allosteric effector GTP functions by stabilizing the protein conformation that binds the tetrahedral intermediate(s) formed during glutamine hydrolysis. Inhibited by the product CTP, via allosteric rather than competitive inhibition. In terms of biological role, catalyzes the ATP-dependent amination of UTP to CTP with either L-glutamine or ammonia as the source of nitrogen. Regulates intracellular CTP levels through interactions with the four ribonucleotide triphosphates. The protein is CTP synthase of Nostoc punctiforme (strain ATCC 29133 / PCC 73102).